The following is a 277-amino-acid chain: MAIRLYRAYTPGTRNRSVPKFDEIVKCQPQKKLTYNKHIKKGRNNRGIITSQHRGGGHKRLYRKIDFQRNKKYITGKIKTIEYDPNRNTYICLINYEDGEKRYILYPRGIKLDDTIISSEEAPILIGNTLPLTNMPLGTAIHNIEITPGKGGQLVRAAGTVAKIIAKEGQLVTLRLPSGEIRLISQKCLATIGQIGNVDVNNLRIGKAGSKRWLGKRPKVRGVVMNPIDHPHGGGEGRAPIGRKKPLTPWGHPALGKRSRKNNKYSDTLILRRRKNS.

The interval 223-277 is disordered; the sequence is VVMNPIDHPHGGGEGRAPIGRKKPLTPWGHPALGKRSRKNNKYSDTLILRRRKNS.

Belongs to the universal ribosomal protein uL2 family. In terms of assembly, part of the 50S ribosomal subunit.

The protein resides in the plastid. The protein localises to the chloroplast. The polypeptide is Large ribosomal subunit protein uL2c (rpl2) (Marchantia polymorpha (Common liverwort)).